We begin with the raw amino-acid sequence, 292 residues long: Probable ABC transporter permease protein YurN (292 aa).

Transmembrane regions (helical) follow at residues 7-27, 70-90, 106-126, 160-180, 215-235, and 260-280; these read IIPY…YIPI, VLYA…LAAV, VFFL…DFIY, VIFV…IVSI, FVAV…PYIL, and MMGY…ALSL. The 217-residue stretch at 66–282 folds into the ABC transmembrane type-1 domain; that stretch reads LTNNVLYAVI…IITLALSLMQ (217 aa).

The protein belongs to the binding-protein-dependent transport system permease family. MalFG subfamily.

Its subcellular location is the cell membrane. In terms of biological role, probably part of the binding-protein-dependent transport system YurMNO. Probably responsible for the translocation of the substrate across the membrane. This Bacillus subtilis (strain 168) protein is Probable ABC transporter permease protein YurN (yurN).